The sequence spans 259 residues: Early E4 30 kDa protein (259 aa).

It belongs to the adenoviridae E4 30 to 34 kDa protein family. Interacts with E1B-55k.

It is found in the host nucleus. The protein localises to the host cytoplasm. Its function is as follows. Plays a major role to prevent cellular inhibition of viral genome replication by nuclear bodies. Assembles an SCF-like E3 ubiquitin ligase complex based on the cellular proteins ELOB, ELOC, CUL5 and RBX1, in cooperation with viral E1B-55K. This viral RING-type ligase ubiquitinates cellular substrates prior to proteasomal degradation: p53/TP53, LIG4, MRE11-RAD50-NBS1 (MRN) complex, ITGA3, DAXX and BLM. This chain is Early E4 30 kDa protein, found in Canine adenovirus serotype 2 (strain Toronto A 26-61) (CAdV-2).